The following is a 337-amino-acid chain: Protein ABHD13 (337 aa).

Residues 37 to 57 (FHLYGGIILLLLIFISIAGIL) form a helical; Signal-anchor for type II membrane protein membrane-spanning segment. Residues Ser193, Asp268, and His298 each act as charge relay system in the active site. Asn299 is a glycosylation site (N-linked (GlcNAc...) asparagine).

The protein belongs to the serine esterase family.

The protein localises to the membrane. This is Protein ABHD13 from Homo sapiens (Human).